The chain runs to 303 residues: Ribosomal protein uL3 glutamine methyltransferase (303 aa).

This sequence belongs to the protein N5-glutamine methyltransferase family. PrmB subfamily.

It catalyses the reaction L-glutaminyl-[ribosomal protein uL3] + S-adenosyl-L-methionine = N(5)-methyl-L-glutaminyl-[ribosomal protein uL3] + S-adenosyl-L-homocysteine + H(+). In terms of biological role, methylates large ribosomal subunit protein uL3 on a specific glutamine residue. In Neisseria meningitidis serogroup A / serotype 4A (strain DSM 15465 / Z2491), this protein is Ribosomal protein uL3 glutamine methyltransferase.